We begin with the raw amino-acid sequence, 302 residues long: Oxygen-dependent coproporphyrinogen-III oxidase (302 aa).

Residue Ser-94 coordinates substrate. Residues His-98 and His-108 each coordinate a divalent metal cation. His-108 (proton donor) is an active-site residue. 110 to 112 (NVR) lines the substrate pocket. The a divalent metal cation site is built by His-147 and His-177. The tract at residues 242–277 (YVEFNLVYDRGTLFGLQTGGRTESILMSMPPLARWE) is important for dimerization. 260–262 (GGR) is a substrate binding site.

The protein belongs to the aerobic coproporphyrinogen-III oxidase family. Homodimer. The cofactor is a divalent metal cation.

The protein resides in the cytoplasm. It carries out the reaction coproporphyrinogen III + O2 + 2 H(+) = protoporphyrinogen IX + 2 CO2 + 2 H2O. Its pathway is porphyrin-containing compound metabolism; protoporphyrin-IX biosynthesis; protoporphyrinogen-IX from coproporphyrinogen-III (O2 route): step 1/1. Its function is as follows. Involved in the heme biosynthesis. Catalyzes the aerobic oxidative decarboxylation of propionate groups of rings A and B of coproporphyrinogen-III to yield the vinyl groups in protoporphyrinogen-IX. The chain is Oxygen-dependent coproporphyrinogen-III oxidase from Aeromonas hydrophila subsp. hydrophila (strain ATCC 7966 / DSM 30187 / BCRC 13018 / CCUG 14551 / JCM 1027 / KCTC 2358 / NCIMB 9240 / NCTC 8049).